A 542-amino-acid chain; its full sequence is Apolipoprotein N-acyltransferase (542 aa).

Helical transmembrane passes span 26–46 (ASVICCMCGYGLLWRGLLSLV), 54–74 (IWCLAFFWTWSVEGFHFSWML), 89–109 (LLISYLAVTFASFSCLVVLCF), 113–133 (YWGALFWLPGVWVAIESVRYY), 163–183 (WAGQSFVVIATNLGCCSVLVF), and 187–207 (FSYGLWLVCCAFPYFLGGTYY). A CN hydrolase domain is found at 220–499 (LRVAIVQPGY…PDVLQVSVPV (280 aa)). Glu-264 acts as the Proton acceptor in catalysis. Lys-349 is an active-site residue. The Nucleophile role is filled by Cys-404. The helical transmembrane segment at 509-529 (FGDAPLLFVAVSSVLGVVGYF) threads the bilayer.

It belongs to the CN hydrolase family. Apolipoprotein N-acyltransferase subfamily.

The protein resides in the cell inner membrane. It catalyses the reaction N-terminal S-1,2-diacyl-sn-glyceryl-L-cysteinyl-[lipoprotein] + a glycerophospholipid = N-acyl-S-1,2-diacyl-sn-glyceryl-L-cysteinyl-[lipoprotein] + a 2-acyl-sn-glycero-3-phospholipid + H(+). Its pathway is protein modification; lipoprotein biosynthesis (N-acyl transfer). In terms of biological role, catalyzes the phospholipid dependent N-acylation of the N-terminal cysteine of apolipoprotein, the last step in lipoprotein maturation. The chain is Apolipoprotein N-acyltransferase from Chlamydia muridarum (strain MoPn / Nigg).